The sequence spans 279 residues: MAESLHRAFICGHPVAHSRSPVIHNFWLKQHGIEGSYERRDIAPEAFSLFIREFPRFYMGGNVTIPHKESAWRLVETRDEAAETIGAVNTLWLQDGRIMGGNTDTYGFAANLDMELAGWEKNAVATVLGAGGAALAVVHALQSRGIRDIRIVNRTVSRARAVVDRFKGGTSAHAWEAVPDLLSDTSLLVNTTSLGMHGGPEGHIDLAPLPDSAIVTDIVYVPLRTPLLASAAARGLRTVDGLGMLLHQAVPGFERWFGVRPEVTPHLREIVVADLEAGK.

Residues 18 to 20 (SRS) and threonine 64 each bind shikimate. Residue lysine 68 is the Proton acceptor of the active site. Glutamate 80 provides a ligand contact to NADP(+). Residues asparagine 89 and aspartate 104 each contribute to the shikimate site. NADP(+) is bound by residues 129 to 133 (GAGGA), 153 to 158 (NRTVSR), and isoleucine 218. Position 220 (tyrosine 220) interacts with shikimate. Glycine 241 serves as a coordination point for NADP(+).

Belongs to the shikimate dehydrogenase family. As to quaternary structure, homodimer.

It catalyses the reaction shikimate + NADP(+) = 3-dehydroshikimate + NADPH + H(+). The protein operates within metabolic intermediate biosynthesis; chorismate biosynthesis; chorismate from D-erythrose 4-phosphate and phosphoenolpyruvate: step 4/7. Involved in the biosynthesis of the chorismate, which leads to the biosynthesis of aromatic amino acids. Catalyzes the reversible NADPH linked reduction of 3-dehydroshikimate (DHSA) to yield shikimate (SA). The protein is Shikimate dehydrogenase (NADP(+)) of Chelativorans sp. (strain BNC1).